We begin with the raw amino-acid sequence, 516 residues long: Nuclear speckle splicing regulatory protein 1 (516 aa).

4 disordered regions span residues 1-43 (MATS…GESL), 111-137 (ERKK…KFAD), 151-170 (KERQ…EAAL), and 188-494 (QTVG…SSAR). Serine 33 bears the Phosphoserine mark. Residues 100–176 (KYINQLLRAV…EAALDVKKQK (77 aa)) are a coiled coil. The segment covering 207-221 (TSSAAAERSPSPEST) has biased composition (low complexity). Composition is skewed to basic and acidic residues over residues 222-239 (ANRR…DQVD) and 271-466 (ERER…KLVE). Residues 358–401 (KGERDRRDNSPKDRERDRKGERDRRDNSPKDRERETRDKSPKDR) adopt a coiled-coil conformation.

The protein belongs to the NSRP1 family.

This chain is Nuclear speckle splicing regulatory protein 1 (nsrp1), found in Danio rerio (Zebrafish).